The primary structure comprises 140 residues: UPF0306 protein YhbP (140 aa).

Belongs to the UPF0306 family.

This Escherichia coli O6:H1 (strain CFT073 / ATCC 700928 / UPEC) protein is UPF0306 protein YhbP.